Reading from the N-terminus, the 535-residue chain is EH domain-containing protein 3 (535 aa).

Met1 is modified (N-acetylmethionine). A Dynamin-type G domain is found at Phe55 to Pro286. The interval Gly65–Thr72 is G1 motif. ATP is bound at residue Gly65–Thr72. Positions Glu91–Pro92 are G2 motif. The tract at residues Asp153–Gly156 is G3 motif. Positions Asp198–Gln227 form a coiled coil. The G4 motif stretch occupies residues Asn219 to Asp222. Lys220 contacts ATP. Residue Ile243 is a region of interest, G5 motif. Residue Trp258 coordinates ATP. A Glycyl lysine isopeptide (Lys-Gly) (interchain with G-Cter in SUMO) cross-link involves residue Lys315. 2 positions are modified to phosphoserine: Ser349 and Ser456. The region spanning Asp444–Lys532 is the EH domain. The 36-residue stretch at Leu476 to Lys511 folds into the EF-hand domain. Ca(2+) is bound by residues Asp489, Asp491, Asp493, Met495, and Glu500. Residue Lys511 forms a Glycyl lysine isopeptide (Lys-Gly) (interchain with G-Cter in SUMO) linkage.

It belongs to the TRAFAC class dynamin-like GTPase superfamily. Dynamin/Fzo/YdjA family. EHD subfamily. In terms of assembly, homooligomer. Heterooligomer with EHD1. Heterooligomer with EHD2 and EHD4; ATP-binding is required for heterooligomerization. Interacts with PACSIN1. Interacts with PACSIN2. Interacts (via EH domain) with MICALL1. Interacts (via EH domain) with RAB11FIP2. Interacts with ANK2. Interacts with CACNA1GG and CACNA1H. As to expression, strong expression seen in the kidney, brain and liver. In the kidney, expressed exclusively by glomerular endothelial cells; at protein level. Expressed in skeletal muscle neuromuscular junction perisynaptic region; at protein level.

It is found in the recycling endosome membrane. It localises to the cell membrane. Its subcellular location is the cell projection. The protein localises to the cilium membrane. The protein resides in the cytoplasmic vesicle. Functionally, ATP- and membrane-binding protein that controls membrane reorganization/tubulation upon ATP hydrolysis. In vitro causes tubulation of endocytic membranes. Binding to phosphatidic acid induces its membrane tubulation activity. Plays a role in endocytic transport. Involved in early endosome to recycling endosome compartment (ERC), retrograde early endosome to Golgi, and endosome to plasma membrane (rapid recycling) protein transport. Involved in the regulation of Golgi maintenance and morphology. Involved in the recycling of internalized D1 dopamine receptor. Plays a role in cardiac protein trafficking probably implicating ANK2. Involved in the ventricular membrane targeting of SLC8A1 and CACNA1C and probably the atrial membrane localization of CACNA1GG and CACNA1H implicated in the regulation of atrial myocyte excitability and cardiac conduction. In conjunction with EHD4 may be involved in endocytic trafficking of KDR/VEGFR2 implicated in control of glomerular function. Involved in the rapid recycling of integrin beta-3 implicated in cell adhesion maintenance. Involved in the unidirectional retrograde dendritic transport of endocytosed BACE1 and in efficient sorting of BACE1 to axons implicating a function in neuronal APP processing. Plays a role in the formation of the ciliary vesicle, an early step in cilium biogenesis; possibly sharing redundant functions with Ehd1. The protein is EH domain-containing protein 3 of Mus musculus (Mouse).